The sequence spans 137 residues: Phosphomevalonate dehydratase small subunit (137 aa).

The active-site Proton acceptor is the serine 62.

The protein belongs to the AcnX type II small subunit family. As to quaternary structure, heterodimer composed of a large subunit (PMDh-L) and a small subunit (PMDh-S).

The catalysed reaction is (R)-5-phosphomevalonate = (2E)-3-methyl-5-phosphooxypent-2-enoate + H2O. Its pathway is isoprenoid biosynthesis; isopentenyl diphosphate biosynthesis via mevalonate pathway. In terms of biological role, component of a hydro-lyase that catalyzes the dehydration of mevalonate 5-phosphate (MVA5P) to form trans-anhydromevalonate 5-phosphate (tAHMP). Involved in the archaeal mevalonate (MVA) pathway, which provides fundamental precursors for isoprenoid biosynthesis, such as isopentenyl diphosphate (IPP) and dimethylallyl diphosphate (DMAPP). In Methanothrix thermoacetophila (strain DSM 6194 / JCM 14653 / NBRC 101360 / PT) (Methanosaeta thermophila), this protein is Phosphomevalonate dehydratase small subunit.